The following is a 196-amino-acid chain: Rho-related GTP-binding protein RhoB (196 aa).

12-19 is a GTP binding site; it reads GDGACGKT. A glycan (O-linked (GlcNAc) tyrosine; by Photorhabdus PAU_02230) is linked at Tyr34. An Effector region motif is present at residues 34 to 42; the sequence is YVPTVFENY. A (Microbial infection) O-linked (Glc) threonine; by C.difficile toxins TcdA and TcdB glycan is attached at Thr37. Asn41 bears the ADP-ribosylasparagine; by botulinum toxin mark. GTP is bound by residues 59–63 and 117–120; these read DTAGQ and NKKD. At Tyr154 the chain carries Phosphotyrosine. S-palmitoyl cysteine attachment occurs at residues Cys189 and Cys192. Cys193 carries the post-translational modification Cysteine methyl ester. The S-farnesyl cysteine; in plasma membrane form moiety is linked to residue Cys193. Cys193 is lipidated: S-geranylgeranyl cysteine; in endosomal form. Residues 194–196 constitute a propeptide, removed in mature form; the sequence is KVL.

Belongs to the small GTPase superfamily. Rho family. As to quaternary structure, binds ROCK1 and ROCK2. Also binds PKN1/PRK1. Interacts with ARGGEF3. Interacts with RTKN. Interacts with AKAP13. Interacts with RIPOR1. Post-translationally, prenylation specifies the subcellular location of RHOB. The farnesylated form is localized to the plasma membrane while the geranylgeranylated form is localized to the endosome. (Microbial infection) Glycosylated at Tyr-34 by Photorhabdus asymbiotica toxin PAU_02230. Mono-O-GlcNAcylation by PAU_02230 inhibits downstream signaling by an impaired interaction with diverse regulator and effector proteins of Rho and leads to actin disassembly. In terms of processing, (Microbial infection) Glucosylated at Thr-37 by C.difficile toxins TcdA and TcdB in the colonic epithelium. Monoglucosylation completely prevents the recognition of the downstream effector, blocking the GTPases in their inactive form, leading to actin cytoskeleton disruption.

Its subcellular location is the late endosome membrane. The protein localises to the cell membrane. The protein resides in the nucleus. It is found in the cleavage furrow. In terms of biological role, mediates apoptosis in neoplastically transformed cells after DNA damage. Not essential for development but affects cell adhesion and growth factor signaling in transformed cells. Plays a negative role in tumorigenesis as deletion causes tumor formation. Involved in intracellular protein trafficking of a number of proteins. Targets PKN1 to endosomes and is involved in trafficking of the EGF receptor from late endosomes to lysosomes. Also required for stability and nuclear trafficking of AKT1/AKT which promotes endothelial cell survival during vascular development. Serves as a microtubule-dependent signal that is required for the myosin contractile ring formation during cell cycle cytokinesis. Required for genotoxic stress-induced cell death in breast cancer cells. In Homo sapiens (Human), this protein is Rho-related GTP-binding protein RhoB (RHOB).